A 460-amino-acid polypeptide reads, in one-letter code: GTPase Der (460 aa).

EngA-type G domains follow at residues 2–164 (QSII…HEEF) and 196–368 (IRVG…ENFT). GTP is bound by residues 8–15 (GKPNVGKS), 55–59 (DSGGL), 116–119 (NKVD), 202–209 (GRVNVGKS), 249–253 (DTAGI), and 313–316 (NKWD). One can recognise a KH-like domain in the interval 369–453 (QKIQTSKLNT…PLVIASRKKG (85 aa)).

The protein belongs to the TRAFAC class TrmE-Era-EngA-EngB-Septin-like GTPase superfamily. EngA (Der) GTPase family. Associates with the 50S ribosomal subunit.

GTPase that plays an essential role in the late steps of ribosome biogenesis. The sequence is that of GTPase Der from Campylobacter jejuni subsp. jejuni serotype O:2 (strain ATCC 700819 / NCTC 11168).